A 411-amino-acid chain; its full sequence is MAATATMATSGSARKRLLKEEDMTKVEFETSEEVDVTPTFDTMGLREDLLRGIYAYGFEKPSAIQQRAIKQIIKGRDVIAQSQSGTGKTATFSISVLQCLDIQVRETQALILAPTRELAVQIQKGLLALGDYMNVQCHACIGGTNVGEDIRKLDYGQHVVAGTPGRVFDMIRRRSLRTRAIKMLVLDEADEMLNKGFKEQIYDVYRYLPPATQVVLISATLPHEILEMTNKFMTDPIRILVKRDELTLEGIKQFFVAVEREEWKFDTLCDLYDTLTITQAVIFCNTKRKVDWLTEKMREANFTVSSMHGDMPQKERESIMKEFRSGASRVLISTDVWARGLDVPQVSLIINYDLPNNRELYIHRIGRSGRYGRKGVAINFVKNDDIRILRDIEQYYSTQIDEMPMNVADLI.

Position 1 is an N-acetylmethionine (Met-1). The residue at position 2 (Ala-2) is an N-acetylalanine; in Eukaryotic initiation factor 4A-III, N-terminally processed. 2 positions are modified to phosphoserine: Ser-10 and Ser-12. A Glycyl lysine isopeptide (Lys-Gly) (interchain with G-Cter in SUMO2) cross-link involves residue Lys-19. The short motif at 38–66 (PTFDTMGLREDLLRGIYAYGFEKPSAIQQ) is the Q motif element. ATP contacts are provided by residues Lys-60, Gln-65, and 85–90 (GTGKTA). Residues 69-239 (IKQIIKGRDV…NKFMTDPIRI (171 aa)) form the Helicase ATP-binding domain. Lys-124 is modified (N6-acetyllysine). A Glycyl lysine isopeptide (Lys-Gly) (interchain with G-Cter in SUMO2) cross-link involves residue Lys-152. Thr-163 is subject to Phosphothreonine. The DEAD box motif lies at 187-190 (DEAD). N6-acetyllysine occurs at positions 198 and 296. Residues 250 to 411 (GIKQFFVAVE…EMPMNVADLI (162 aa)) enclose the Helicase C-terminal domain. A Glycyl lysine isopeptide (Lys-Gly) (interchain with G-Cter in SUMO2) cross-link involves residue Lys-314. N6-acetyllysine is present on Lys-321. ATP-binding positions include Asp-342 and 367–371 (RSGRY). Glycyl lysine isopeptide (Lys-Gly) (interchain with G-Cter in SUMO2) cross-links involve residues Lys-374 and Lys-382.

Belongs to the DEAD box helicase family. eIF4A subfamily. As to quaternary structure, identified in the spliceosome C complex. Core component of the mRNA splicing-dependent exon junction complex (EJC); the core complex contains CASC3, EIF4A3, MAGOH or MAGOHB, and RBM8A. Interacts with CASC3, MAGOH, NXF1, RBM8A and ALYREF/THOC4. Component of the ALYREF/THOC4-EJC-RNA complex; in the complex interacts with MAGOH, RBM8A and THOC4 (via the WXHD motif); these interactions are likely specific to RNA-bound EJC. May interact with NOM1. Interacts with POLDIP3. Interacts with CWC22 and PRPF19 in an RNA-independent manner. Direct interaction with CWC22 is mediated by the helicase C-terminal domain. Full interaction with CWC22 occurs only when EIF4A3 is not part of the EJC and prevents EIF4A3 binding to RNA. Identified in a complex composed of the EJC core, UPF3B and UPF2. The EJC core can also interact with UPF3A (in vitro). Interacts with NCBP3. Interacts with NRDE2. Interacts with DHX34; the interaction is RNA-independent.

It localises to the nucleus. Its subcellular location is the nucleus speckle. It is found in the cytoplasm. The enzyme catalyses ATP + H2O = ADP + phosphate + H(+). Its activity is regulated as follows. The ATPase activity is increased some 4-fold in the presence of RNA. ATP-dependent RNA helicase. Involved in pre-mRNA splicing as component of the spliceosome. Core component of the splicing-dependent multiprotein exon junction complex (EJC) deposited at splice junctions on mRNAs. The EJC is a dynamic structure consisting of core proteins and several peripheral nuclear and cytoplasmic associated factors that join the complex only transiently either during EJC assembly or during subsequent mRNA metabolism. The EJC marks the position of the exon-exon junction in the mature mRNA for the gene expression machinery and the core components remain bound to spliced mRNAs throughout all stages of mRNA metabolism thereby influencing downstream processes including nuclear mRNA export, subcellular mRNA localization, translation efficiency and nonsense-mediated mRNA decay (NMD). Its RNA-dependent ATPase and RNA-helicase activities are induced by CASC3, but abolished in presence of the MAGOH-RBM8A heterodimer, thereby trapping the ATP-bound EJC core onto spliced mRNA in a stable conformation. The inhibition of ATPase activity by the MAGOH-RBM8A heterodimer increases the RNA-binding affinity of the EJC. Involved in translational enhancement of spliced mRNAs after formation of the 80S ribosome complex. Binds spliced mRNA in sequence-independent manner, 20-24 nucleotides upstream of mRNA exon-exon junctions. Shows higher affinity for single-stranded RNA in an ATP-bound core EJC complex than after the ATP is hydrolyzed. Involved in the splicing modulation of BCL2L1/Bcl-X (and probably other apoptotic genes); specifically inhibits formation of proapoptotic isoforms; the function is different from the established EJC assembly. Involved in craniofacial development. The protein is Eukaryotic initiation factor 4A-III (EIF4A3) of Bos taurus (Bovine).